A 500-amino-acid polypeptide reads, in one-letter code: MSLYGGIPTNLVSGMSSAGAICTTQIRDAREREKREIGLLNDRLADYIEKVRFLKAQNHVLSHDIEILRRGFSGGGHISSFFESEISNCTVISERILSSRTKFQADITGLEGEIEIYRKKWLEALKVVRSHREDHHVNLDKLAEVEAQIALFNRKIRIVEEDVLRIRRETGGIQNDIGRIHSQIHAEIALKNERHHSVQMLLQRVQVIQTENSSRIEQELIYIHRDTTLENRDYFRQELQAAMRDIRANYEAMSIRSREDIEIAYRKRIDEIRVIPAHVHIEDYREELLSIRTTLSTTHSRLAEIESRNAWLLTTITDLKHQQAEEARIFEATLDAKQATYEQFKERCTELSIQMEKLCDHETSLQAELERYRVLLNGANVTTYVSNSTGAAGYRSSTHVATTTTTTTNGYSSGYTAGGYTSGGYTTGGYTRGITAGGAVGGISTGGYIGRSSSSHGISVGGNIGGVSVGGHINGYHASGDISAAGRHHESSYSYSSSNN.

A head region spans residues 1-36 (MSLYGGIPTNLVSGMSSAGAICTTQIRDAREREKRE). Residues 33-383 (EKREIGLLND…VLLNGANVTT (351 aa)) form the IF rod domain. The interval 37–68 (IGLLNDRLADYIEKVRFLKAQNHVLSHDIEIL) is coil 1A. Residues 69–81 (RRGFSGGGHISSF) form a linker 1 region. A coil 1B region spans residues 82–219 (FESEISNCTV…TENSSRIEQE (138 aa)). Residues 220-237 (LIYIHRDTTLENRDYFRQ) form a linker 12 region. The segment at 238–383 (ELQAAMRDIR…VLLNGANVTT (146 aa)) is coil 2. The tail stretch occupies residues 384–496 (YVSNSTGAAG…RHHESSYSYS (113 aa)).

It belongs to the intermediate filament family.

The protein localises to the cytoplasm. Its function is as follows. Cytoplasmic intermediate filaments provide mechanical strength to cells. Not essential protein. The polypeptide is Intermediate filament protein ifc-1 (ifc-1) (Caenorhabditis elegans).